A 107-amino-acid chain; its full sequence is Quaternary ammonium compound-resistance protein QacC (107 aa).

Over 1-2 (MP) the chain is Cytoplasmic. A helical membrane pass occupies residues 3–20 (YIYLIIAISTEVIGSAFL). Residues 21–29 (KSSEGFSKF) lie on the Extracellular side of the membrane. The chain crosses the membrane as a helical span at residues 30-47 (IPSLGTIISFGICFYFLS). Residues 48-56 (KTMQHLPLN) lie on the Cytoplasmic side of the membrane. Residues 57-75 (ITYATWAGLGLVLTTVVSI) traverse the membrane as a helical segment. At 76–85 (IIFKEQINLI) the chain is on the extracellular side. A helical transmembrane segment spans residues 86-103 (TIVSIVLIIVGVVSLNIF). The Cytoplasmic portion of the chain corresponds to 104–107 (GTSH).

Belongs to the drug/metabolite transporter (DMT) superfamily. Small multidrug resistance (SMR) (TC 2.A.7.1) family.

Its subcellular location is the cell membrane. Ethidium export is inhibited by N-ethylmaleimide (NEM). Multidrug exporter. Is implicated for the resistance to bacteriocidal quaternary ammonium compounds and ethidium bromide. The sequence is that of Quaternary ammonium compound-resistance protein QacC from Staphylococcus aureus.